The following is a 103-amino-acid chain: Small ribosomal subunit protein uS10 (103 aa).

It belongs to the universal ribosomal protein uS10 family. In terms of assembly, part of the 30S ribosomal subunit.

Functionally, involved in the binding of tRNA to the ribosomes. This is Small ribosomal subunit protein uS10 from Alteromonas mediterranea (strain DSM 17117 / CIP 110805 / LMG 28347 / Deep ecotype).